A 222-amino-acid chain; its full sequence is Tegument protein UL26 (222 aa).

Belongs to the herpesviridae US22 family. As to quaternary structure, interacts with UL25. Interacts with ISGylation machinery components ISG15, UBA7 and HERC5; these interactions inhibit global protein ISGylation. In terms of processing, ISGylated; ISGylation regulates UL26 stability and inhibits its activities to suppress NF-kappa-B signaling.

Its subcellular location is the virion tegument. The protein resides in the host nucleus. Plays a role in the inhibition of host NF-kappa-B. This inhibition affects both the canonical and the non-canonical pathways. Blocks the induction of host IKK phosphorylation. May also influence the normal phosphorylation state of several tegument proteins including pp28 in virions. Also suppresses virus-induced ISGylation independent of its own ISGylation. The polypeptide is Tegument protein UL26 (UL26) (Homo sapiens (Human)).